A 747-amino-acid chain; its full sequence is Protein MTSS 2 (747 aa).

One can recognise an IMD domain in the interval 1–252; the sequence is METAEKECGA…EQVIKDLKGS (252 aa). A coiled-coil region spans residues 135–159; that stretch reads EIKKKSSDTLKLQKKARKELLGKGD. Low complexity-rich tracts occupy residues 256-284, 321-332, and 349-367; these read WSYQTPPSSPSSSSSRKSSMCSAPSSSSS, SSVSSHDSGFVS, and TSQKSSSSASSEASETCQS. Disordered regions lie at residues 256–302, 318–441, 457–522, and 543–599; these read WSYQ…YSPS, ARLS…EEVS, LEHQ…RNSN, and PTAG…PTVP. T260 carries the phosphothreonine modification. Position 264 is a phosphoserine (S264). Residues 368–378 show a composition bias toward polar residues; that stretch reads VSECSSPTSDW. The span at 397–406 shows a compositional bias: basic and acidic residues; that stretch reads DRVELLRDTE. Phosphoserine is present on S441. Positions 466–479 are enriched in low complexity; sequence SLQYSSGYSTQTTT. A compositionally biased stretch (polar residues) spans 480 to 492; it reads PSCSEDTIPSQGS. 6 positions are modified to phosphoserine: S579, S601, S612, S624, S634, and S639. Disordered regions lie at residues 638–664 and 691–720; these read LSLPNTAWGSPSPEAAGYPGAGAEDEQ and GQFPFPTALSATPTEETPTPPPAATSDPPA. At T643 the chain carries Phosphothreonine. Composition is skewed to low complexity over residues 646-659 and 696-707; these read GSPSPEAAGYPGAG and PTALSATPTEET. Residues 719–736 enclose the WH2 domain; the sequence is PAEDMLVAIRRGVRLRRT.

The protein belongs to the MTSS family. As to quaternary structure, interacts (via IMD domain) with RAC1; this interaction may be important to potentiate PDGF-induced RAC1 activation.

Its subcellular location is the cytoplasm. It is found in the cell projection. The protein resides in the ruffle. Functionally, involved in plasma membrane dynamics. Potentiated PDGF-mediated formation of membrane ruffles and lamellipodia in fibroblasts, acting via RAC1 activation. May function in actin bundling. The protein is Protein MTSS 2 of Homo sapiens (Human).